An 884-amino-acid polypeptide reads, in one-letter code: Protein translocase subunit SecA (884 aa).

ATP contacts are provided by residues glutamine 83, 101–105, and aspartate 491; that span reads GEGKT.

This sequence belongs to the SecA family.

The protein localises to the plastid. Its subcellular location is the chloroplast stroma. It localises to the chloroplast thylakoid membrane. The catalysed reaction is ATP + H2O + cellular proteinSide 1 = ADP + phosphate + cellular proteinSide 2.. Functionally, has a central role in coupling the hydrolysis of ATP to the transfer of proteins across the thylakoid membrane. This chain is Protein translocase subunit SecA, found in Pyropia yezoensis (Susabi-nori).